The chain runs to 492 residues: Diacylglycerol kinase 7 (492 aa).

Residues 90–248 (APHAPMVVFI…SWKIVVSMPS (159 aa)) enclose the DAGKc domain.

The protein belongs to the eukaryotic diacylglycerol kinase family. In terms of assembly, monomer. In terms of tissue distribution, highly expressed in flowers, and at low levels in roots, stems and leaves.

The catalysed reaction is a 1,2-diacyl-sn-glycerol + ATP = a 1,2-diacyl-sn-glycero-3-phosphate + ADP + H(+). Its function is as follows. Phosphorylates the second messenger diacylglycerol (DAG) to generate phosphatidic acid (PA), another important signaling molecule. PA is required for plant development and responses to abiotic stress and pathogen attack. May be involved in the accumulation of PA during cold stress xhibits high specificity for 1,2-dioleoyl-sn-glycerol (1,2-DOG), 1-palmitoyl, 2-oleoyl-sn-glycerol (1,2 POG), 1-stearoyl, 2-linoleoyl-sn-glycerol (1,2-SLG) and 1-oleoyl, 2-palmitoyl-sn-glycerol (1,2-OPG). This chain is Diacylglycerol kinase 7 (DGK7), found in Arabidopsis thaliana (Mouse-ear cress).